The primary structure comprises 404 residues: Argininosuccinate synthase (404 aa).

Residues 12 to 20 and alanine 39 each bind ATP; that span reads AYSGGLDTS. 2 residues coordinate L-citrulline: tyrosine 91 and serine 96. Glycine 121 provides a ligand contact to ATP. Residues threonine 123, asparagine 127, and aspartate 128 each coordinate L-aspartate. Asparagine 127 is a binding site for L-citrulline. The L-citrulline site is built by arginine 131, serine 180, serine 189, glutamate 265, and tyrosine 277.

The protein belongs to the argininosuccinate synthase family. Type 1 subfamily. As to quaternary structure, homotetramer.

The protein localises to the cytoplasm. It carries out the reaction L-citrulline + L-aspartate + ATP = 2-(N(omega)-L-arginino)succinate + AMP + diphosphate + H(+). It functions in the pathway amino-acid biosynthesis; L-arginine biosynthesis; L-arginine from L-ornithine and carbamoyl phosphate: step 2/3. In Vibrio campbellii (strain ATCC BAA-1116), this protein is Argininosuccinate synthase.